The following is a 248-amino-acid chain: Probable transcriptional regulator LumQ (248 aa).

The 99-residue stretch at 148–246 (VLIDNYIEQH…GMSPTRYQFF (99 aa)) folds into the HTH araC/xylS-type domain. 2 consecutive DNA-binding regions (H-T-H motif) follow at residues 165 to 186 (AELSSVAFLAQSQFYALFKSQM) and 213 to 236 (LSQVAQLCGFSSQSSFSQAFRRLY).

Functionally, probable transcriptional regulator. Its target gene(s) is not yet known. The polypeptide is Probable transcriptional regulator LumQ (lumQ) (Photobacterium leiognathi).